We begin with the raw amino-acid sequence, 540 residues long: Phosphoenolpyruvate carboxykinase (ATP) (540 aa).

Arginine 65 provides a ligand contact to substrate. Residue lysine 87 is modified to N6-acetyllysine. Substrate is bound by residues tyrosine 207 and lysine 213. ATP contacts are provided by residues lysine 213, histidine 232, and 248–256 (GLSGTGKTT). Mn(2+) is bound by residues lysine 213 and histidine 232. Mn(2+) is bound at residue aspartate 269. ATP-binding positions include glutamate 297, arginine 333, 449 to 450 (RI), and threonine 455. Arginine 333 contributes to the substrate binding site. Lysine 523 carries the post-translational modification N6-acetyllysine.

Belongs to the phosphoenolpyruvate carboxykinase (ATP) family. In terms of assembly, monomer. Requires Mn(2+) as cofactor.

The protein localises to the cytoplasm. The catalysed reaction is oxaloacetate + ATP = phosphoenolpyruvate + ADP + CO2. It participates in carbohydrate biosynthesis; gluconeogenesis. In terms of biological role, involved in the gluconeogenesis. Catalyzes the conversion of oxaloacetate (OAA) to phosphoenolpyruvate (PEP) through direct phosphoryl transfer between the nucleoside triphosphate and OAA. The protein is Phosphoenolpyruvate carboxykinase (ATP) of Escherichia coli O157:H7.